We begin with the raw amino-acid sequence, 543 residues long: ATP synthase subunit alpha (543 aa).

An ATP-binding site is contributed by G174–T181.

The protein belongs to the ATPase alpha/beta chains family. F-type ATPases have 2 components, CF(1) - the catalytic core - and CF(0) - the membrane proton channel. CF(1) has five subunits: alpha(3), beta(3), gamma(1), delta(1), epsilon(1). CF(0) has three main subunits: a(1), b(2) and c(9-12). The alpha and beta chains form an alternating ring which encloses part of the gamma chain. CF(1) is attached to CF(0) by a central stalk formed by the gamma and epsilon chains, while a peripheral stalk is formed by the delta and b chains.

It localises to the cell membrane. The enzyme catalyses ATP + H2O + 4 H(+)(in) = ADP + phosphate + 5 H(+)(out). Produces ATP from ADP in the presence of a proton gradient across the membrane. The alpha chain is a regulatory subunit. The protein is ATP synthase subunit alpha of Bifidobacterium longum subsp. infantis (strain ATCC 15697 / DSM 20088 / JCM 1222 / NCTC 11817 / S12).